We begin with the raw amino-acid sequence, 376 residues long: 3-dehydroquinate synthase (376 aa).

Residues 115–119 (GVIGD), 139–140 (TS), lysine 152, and lysine 161 contribute to the NAD(+) site. Zn(2+) contacts are provided by glutamate 194, histidine 256, and histidine 275.

It belongs to the sugar phosphate cyclases superfamily. Dehydroquinate synthase family. Requires Co(2+) as cofactor. It depends on Zn(2+) as a cofactor. NAD(+) serves as cofactor.

The protein localises to the cytoplasm. It carries out the reaction 7-phospho-2-dehydro-3-deoxy-D-arabino-heptonate = 3-dehydroquinate + phosphate. Its pathway is metabolic intermediate biosynthesis; chorismate biosynthesis; chorismate from D-erythrose 4-phosphate and phosphoenolpyruvate: step 2/7. In terms of biological role, catalyzes the conversion of 3-deoxy-D-arabino-heptulosonate 7-phosphate (DAHP) to dehydroquinate (DHQ). In Rhizobium leguminosarum bv. trifolii (strain WSM2304), this protein is 3-dehydroquinate synthase.